We begin with the raw amino-acid sequence, 493 residues long: Chaperone SurA (493 aa).

A signal peptide spans Met1 to Ala33. The interval Phe46–Pro76 is disordered. The span at Gln48–Ser58 shows a compositional bias: low complexity. PpiC domains follow at residues Pro230–Ser332 and Ile346–Asn444.

Its subcellular location is the periplasm. It carries out the reaction [protein]-peptidylproline (omega=180) = [protein]-peptidylproline (omega=0). Its function is as follows. Chaperone involved in the correct folding and assembly of outer membrane proteins. Recognizes specific patterns of aromatic residues and the orientation of their side chains, which are found more frequently in integral outer membrane proteins. May act in both early periplasmic and late outer membrane-associated steps of protein maturation. In Cupriavidus metallidurans (strain ATCC 43123 / DSM 2839 / NBRC 102507 / CH34) (Ralstonia metallidurans), this protein is Chaperone SurA.